The following is an 804-amino-acid chain: Lon protease (804 aa).

A disordered region spans residues methionine 1–serine 23. Residues leucine 30 to isoleucine 224 enclose the Lon N-terminal domain. Glycine 376–threonine 383 contributes to the ATP binding site. The Lon proteolytic domain occupies threonine 612–aspartate 793. Residues serine 699 and lysine 742 contribute to the active site.

This sequence belongs to the peptidase S16 family. In terms of assembly, homohexamer. Organized in a ring with a central cavity.

It is found in the cytoplasm. The enzyme catalyses Hydrolysis of proteins in presence of ATP.. In terms of biological role, ATP-dependent serine protease that mediates the selective degradation of mutant and abnormal proteins as well as certain short-lived regulatory proteins. Required for cellular homeostasis and for survival from DNA damage and developmental changes induced by stress. Degrades polypeptides processively to yield small peptide fragments that are 5 to 10 amino acids long. Binds to DNA in a double-stranded, site-specific manner. In Paraburkholderia phytofirmans (strain DSM 17436 / LMG 22146 / PsJN) (Burkholderia phytofirmans), this protein is Lon protease.